Reading from the N-terminus, the 126-residue chain is Fluoride-specific ion channel FluC 3 (126 aa).

4 helical membrane passes run 7 to 27, 37 to 57, 68 to 87, and 101 to 121; these read MWVGLGGGIGSLLRWWIGLSI, LGTFLINISGAFVIGYLSILF, LMNTAVLTGILGGYTTFSSM, and AIAAGYLIISVLVGLAAAAFG. Na(+) is bound by residues glycine 79 and threonine 82.

The protein belongs to the fluoride channel Fluc/FEX (TC 1.A.43) family.

The protein resides in the cell inner membrane. The enzyme catalyses fluoride(in) = fluoride(out). With respect to regulation, na(+) is not transported, but it plays an essential structural role and its presence is essential for fluoride channel function. In terms of biological role, fluoride-specific ion channel. Important for reducing fluoride concentration in the cell, thus reducing its toxicity. In Yersinia pestis, this protein is Fluoride-specific ion channel FluC 3.